The chain runs to 89 residues: Small ribosomal subunit protein uS14 (89 aa).

The protein belongs to the universal ribosomal protein uS14 family. In terms of assembly, part of the 30S ribosomal subunit. Contacts proteins S3 and S10.

Binds 16S rRNA, required for the assembly of 30S particles and may also be responsible for determining the conformation of the 16S rRNA at the A site. In Azobacteroides pseudotrichonymphae genomovar. CFP2, this protein is Small ribosomal subunit protein uS14.